Reading from the N-terminus, the 131-residue chain is Profilin-2 (131 aa).

Cysteines 13 and 115 form a disulfide. The short motif at 81 to 97 (AVIRGKKGPGGVTVKKT) is the Involved in PIP2 interaction element. Residue threonine 111 is modified to Phosphothreonine.

The protein belongs to the profilin family. Multimer. Occurs in many kinds of cells as a complex with monomeric actin in a 1:1 ratio. Phosphorylated by MAP kinases.

It is found in the cytoplasm. The protein resides in the cytoskeleton. In terms of biological role, binds to actin and affects the structure of the cytoskeleton. At high concentrations, profilin prevents the polymerization of actin, whereas it enhances it at low concentrations. By binding to PIP2, it inhibits the formation of IP3 and DG. This is Profilin-2 from Hevea brasiliensis (Para rubber tree).